The sequence spans 100 residues: NAD(P)H-quinone oxidoreductase subunit 4L, chloroplastic (100 aa).

Transmembrane regions (helical) follow at residues 1–21, 31–51, and 60–80; these read MLEH…YGLI, MCLE…SDFF, and IFSI…PAIL.

The protein belongs to the complex I subunit 4L family. As to quaternary structure, NDH is composed of at least 16 different subunits, 5 of which are encoded in the nucleus.

The protein resides in the plastid. The protein localises to the chloroplast thylakoid membrane. It catalyses the reaction a plastoquinone + NADH + (n+1) H(+)(in) = a plastoquinol + NAD(+) + n H(+)(out). The enzyme catalyses a plastoquinone + NADPH + (n+1) H(+)(in) = a plastoquinol + NADP(+) + n H(+)(out). NDH shuttles electrons from NAD(P)H:plastoquinone, via FMN and iron-sulfur (Fe-S) centers, to quinones in the photosynthetic chain and possibly in a chloroplast respiratory chain. The immediate electron acceptor for the enzyme in this species is believed to be plastoquinone. Couples the redox reaction to proton translocation, and thus conserves the redox energy in a proton gradient. The chain is NAD(P)H-quinone oxidoreductase subunit 4L, chloroplastic from Cucumis sativus (Cucumber).